The chain runs to 679 residues: DNA-directed RNA polymerase subunit beta' (679 aa).

Residues Cys69, Cys71, Cys87, and Cys90 each contribute to the Zn(2+) site. Asp489, Asp491, and Asp493 together coordinate Mg(2+).

It belongs to the RNA polymerase beta' chain family. RpoC1 subfamily. In terms of assembly, in plastids the minimal PEP RNA polymerase catalytic core is composed of four subunits: alpha, beta, beta', and beta''. When a (nuclear-encoded) sigma factor is associated with the core the holoenzyme is formed, which can initiate transcription. The cofactor is Mg(2+). Requires Zn(2+) as cofactor.

It is found in the plastid. The protein resides in the chloroplast. It carries out the reaction RNA(n) + a ribonucleoside 5'-triphosphate = RNA(n+1) + diphosphate. Its function is as follows. DNA-dependent RNA polymerase catalyzes the transcription of DNA into RNA using the four ribonucleoside triphosphates as substrates. This is DNA-directed RNA polymerase subunit beta' from Oenothera argillicola (Appalachian evening primrose).